The sequence spans 384 residues: Soluble hydrogenase, small subunit (384 aa).

The residue at position 194 (Lys-194) is an N6-(pyridoxal phosphate)lysine.

Belongs to the class-V pyridoxal-phosphate-dependent aminotransferase family. As to quaternary structure, heterodimer of a large and a small subunit. Requires pyridoxal 5'-phosphate as cofactor.

The protein resides in the cytoplasm. Its function is as follows. Soluble hydrogenase catalyzes both production and consumption of hydrogen from suitable artificial electron donors or acceptors. This subunit catalyzes the tritium-exchange activity. The polypeptide is Soluble hydrogenase, small subunit (Synechococcus sp. (strain PCC 6716)).